A 206-amino-acid chain; its full sequence is MTYLTTWTADARPRLLEETTDPARIAAVLAAIAVRFERWPLAPGLPAGAEAEDILAAYRSRIDALSAAEGFVLVDVAALHPSAAADWREVAAAARARFLAEHTHDDDEIRFFAAGSGVFYLHVDERVQAVRCEAGDLISVPKGTTHWFDMGVEPDFAAVRFFRAEDGWVGAFTGSDIATRIPDFDALARRSSSAAQPQAEAPAAAS.

The Fe(2+) site is built by H102, H104, E108, and H146. Residues H102, H104, E108, and H146 each contribute to the Ni(2+) site.

The protein belongs to the acireductone dioxygenase (ARD) family. In terms of assembly, monomer. Fe(2+) is required as a cofactor. It depends on Ni(2+) as a cofactor.

The catalysed reaction is 1,2-dihydroxy-5-(methylsulfanyl)pent-1-en-3-one + O2 = 3-(methylsulfanyl)propanoate + CO + formate + 2 H(+). It carries out the reaction 1,2-dihydroxy-5-(methylsulfanyl)pent-1-en-3-one + O2 = 4-methylsulfanyl-2-oxobutanoate + formate + 2 H(+). It functions in the pathway amino-acid biosynthesis; L-methionine biosynthesis via salvage pathway; L-methionine from S-methyl-5-thio-alpha-D-ribose 1-phosphate: step 5/6. In terms of biological role, catalyzes 2 different reactions between oxygen and the acireductone 1,2-dihydroxy-3-keto-5-methylthiopentene (DHK-MTPene) depending upon the metal bound in the active site. Fe-containing acireductone dioxygenase (Fe-ARD) produces formate and 2-keto-4-methylthiobutyrate (KMTB), the alpha-ketoacid precursor of methionine in the methionine recycle pathway. Ni-containing acireductone dioxygenase (Ni-ARD) produces methylthiopropionate, carbon monoxide and formate, and does not lie on the methionine recycle pathway. The sequence is that of Acireductone dioxygenase from Frankia alni (strain DSM 45986 / CECT 9034 / ACN14a).